The primary structure comprises 76 residues: Esculentin-2CG1 (76 aa).

A signal peptide spans 1 to 22 (MFTMKKSMLLLFFLGTISLSLC). Residues 23–37 (EEERSADEDDGEEEV) constitute a propeptide, removed in mature form. A disulfide bridge connects residues Cys-70 and Cys-76.

In terms of tissue distribution, expressed by the skin glands.

It is found in the secreted. Its function is as follows. Antimicrobial peptide active against a variety of Gram-positive and some Gram-negative bacterial strains. Has antifungal activity against a slime mold isolate. Has hemolytic activity against human erythrocytes. In Amolops chunganensis (Chungan torrent frog), this protein is Esculentin-2CG1.